The following is a 415-amino-acid chain: Esterase FrsA (415 aa).

This sequence belongs to the FrsA family. As to quaternary structure, monomer in solution. Homodimer. Forms a 1:1 complex with the unphosphorylated form of the EIIA component of the glucose-specific PTS system (IIAGlc).

The catalysed reaction is a carboxylic ester + H2O = an alcohol + a carboxylate + H(+). In terms of biological role, catalyzes the hydrolysis of esters. In vitro, prefers short chain alkanoate ester as substrate. Displays highest activity towards p-nitrophenyl acetate (pNPA). Has weaker activity towards p-nitrophenyl butyrate (pNPB). This chain is Esterase FrsA, found in Vibrio vulnificus (strain CMCP6).